The following is a 76-amino-acid chain: UPF0291 protein BPUM_1689 (76 aa).

Disordered regions lie at residues 1–31 and 56–76; these read MISKNQLARINELSKKSKETGLSDAEKTEQK and DPEGNDVTPEKLKRERDQNLH. Basic and acidic residues-rich tracts occupy residues 12-31 and 63-76; these read ELSKKSKETGLSDAEKTEQK and TPEKLKRERDQNLH.

Belongs to the UPF0291 family.

It is found in the cytoplasm. The chain is UPF0291 protein BPUM_1689 from Bacillus pumilus (strain SAFR-032).